A 734-amino-acid chain; its full sequence is Phosphoribosylformylglycinamidine synthase subunit PurL (734 aa).

His-49 is a catalytic residue. ATP-binding residues include Tyr-52 and Lys-91. Residue Glu-93 participates in Mg(2+) binding. Substrate-binding positions include 94–97 (SHNH) and Arg-116. The Proton acceptor role is filled by His-95. Asp-117 serves as a coordination point for Mg(2+). Gln-240 is a binding site for substrate. Asp-268 contributes to the Mg(2+) binding site. 312–314 (ESQ) lines the substrate pocket. ATP-binding residues include Asp-491 and Gly-528. Asn-529 contributes to the Mg(2+) binding site. A substrate-binding site is contributed by Ser-531.

It belongs to the FGAMS family. As to quaternary structure, monomer. Part of the FGAM synthase complex composed of 1 PurL, 1 PurQ and 2 PurS subunits.

It localises to the cytoplasm. It carries out the reaction N(2)-formyl-N(1)-(5-phospho-beta-D-ribosyl)glycinamide + L-glutamine + ATP + H2O = 2-formamido-N(1)-(5-O-phospho-beta-D-ribosyl)acetamidine + L-glutamate + ADP + phosphate + H(+). Its pathway is purine metabolism; IMP biosynthesis via de novo pathway; 5-amino-1-(5-phospho-D-ribosyl)imidazole from N(2)-formyl-N(1)-(5-phospho-D-ribosyl)glycinamide: step 1/2. In terms of biological role, part of the phosphoribosylformylglycinamidine synthase complex involved in the purines biosynthetic pathway. Catalyzes the ATP-dependent conversion of formylglycinamide ribonucleotide (FGAR) and glutamine to yield formylglycinamidine ribonucleotide (FGAM) and glutamate. The FGAM synthase complex is composed of three subunits. PurQ produces an ammonia molecule by converting glutamine to glutamate. PurL transfers the ammonia molecule to FGAR to form FGAM in an ATP-dependent manner. PurS interacts with PurQ and PurL and is thought to assist in the transfer of the ammonia molecule from PurQ to PurL. This is Phosphoribosylformylglycinamidine synthase subunit PurL from Zymomonas mobilis subsp. mobilis (strain ATCC 31821 / ZM4 / CP4).